The chain runs to 266 residues: Glutamate racemase (266 aa).

Residues 9–10 (DS) and 41–42 (YG) contribute to the substrate site. Catalysis depends on C72, which acts as the Proton donor/acceptor. Residue 73–74 (NT) participates in substrate binding. C184 functions as the Proton donor/acceptor in the catalytic mechanism. 185-186 (TH) provides a ligand contact to substrate.

The protein belongs to the aspartate/glutamate racemases family.

The catalysed reaction is L-glutamate = D-glutamate. Its pathway is cell wall biogenesis; peptidoglycan biosynthesis. Functionally, provides the (R)-glutamate required for cell wall biosynthesis. This chain is Glutamate racemase, found in Staphylococcus carnosus (strain TM300).